Here is a 38-residue protein sequence, read N- to C-terminus: Lebetin-2-alpha (38 aa).

Residues Gly-1–Gly-38 are disordered. Cys-14 and Cys-30 are joined by a disulfide.

This sequence belongs to the natriuretic peptide family. As to expression, expressed by the venom gland.

Its subcellular location is the secreted. Inhibits platelet aggregation induced by thrombin, collagen and PAF-acether. Human platelet aggregation induced by thrombin is inhibited by synthetic lebetin-1-alpha with (IC(50)=140 nM). In vivo, inhibits collagen-induced thrombocytopenia in rats. Is not toxic upon intravenous injection into mice and rats. Its function is as follows. Inhibits platelet aggregation induced by thrombin, collagen and PAF-acether. Human platelet aggregation induced by thrombin is inhibited by synthetic lebetin-1-beta with (IC(50)=32 nM). In vivo, inhibits collagen-induced thrombocytopenia in rats. Is not toxic upon intravenous injection into mice and rats. In terms of biological role, inhibits platelet aggregation induced by thrombin, collagen and PAF-acether. Human platelet aggregation induced by thrombin is inhibited by synthetic lebetin-1-gamma with (IC(50)=5 nM). In vivo, inhibits collagen-induced thrombocytopenia in rats. Is not toxic upon intravenous injection into mice and rats. Functionally, inhibits platelet aggregation induced by thrombin, collagen and PAF-acether. Human platelet aggregation induced by thrombin is inhibited by synthetic lebetin-1-alpha with (IC(50)=2.5 nM). In vivo, inhibits collagen-induced thrombocytopenia in rats. Is not toxic upon intravenous injection into mice and rats. Inhibits platelet aggregation induced by thrombin, collagen and PAF-acether. Human platelet aggregation induced by thrombin is inhibited by synthetic lebetin-1-alpha with (IC(50)=2.8 nM). In vivo, inhibits collagen-induced thrombocytopenia in rats. Is not toxic upon intravenous injection into mice and rats. The chain is Lebetin-2-alpha from Macrovipera lebetinus (Levantine viper).